Consider the following 1145-residue polypeptide: Cellulose synthase-like protein D3 (1145 aa).

The span at 1–19 (MASNNHFMNSRSNLSTNSD) shows a compositional bias: polar residues. Disordered regions lie at residues 1–38 (MASN…TFAR) and 189–208 (DNNK…SKMD). 2 helical membrane-spanning segments follow: residues 289 to 309 (VISP…LFLM) and 319 to 339 (AIWL…SWLL). The active site involves Asp419. Phosphoserine is present on Ser755. The active site involves Asp848. Helical transmembrane passes span 930–950 (FFLI…QFIV), 956–976 (TFLV…LLEI), 1002–1022 (LAAV…SFTL), 1045–1065 (SLMI…AVGF), 1079–1099 (LIGG…FAKG), and 1109–1129 (TIVY…WVAI).

This sequence belongs to the glycosyltransferase 2 family. Plant cellulose synthase-like D subfamily. In terms of tissue distribution, preferentially expressed in root hair cells. Expressed in roots, leaves, stems, flowers and siliques.

It is found in the golgi apparatus membrane. In terms of biological role, thought to be a Golgi-localized beta-glycan synthase that polymerize the backbones of noncellulosic polysaccharides (hemicelluloses) of plant cell wall. Required for synthesis of a cell wall polysaccharide essential for root hair elongation, but not initiation. May be the functional ortholog of rice CSLD1. In Arabidopsis thaliana (Mouse-ear cress), this protein is Cellulose synthase-like protein D3 (CSLD3).